A 148-amino-acid chain; its full sequence is Receptor activity-modifying protein 3 (148 aa).

The N-terminal stretch at 1-23 (METGALRRPQLLPLLLLLCGGCP) is a signal peptide. At 24-113 (RAGGCNETGM…CTVDRVHLED (90 aa)) the chain is on the extracellular side. N-linked (GlcNAc...) asparagine glycans are attached at residues Asn29, Asn58, Asn71, and Asn103. Disulfide bonds link Cys40–Cys72 and Cys57–Cys104. A helical membrane pass occupies residues 114–138 (PPDEVLIPLIVIPVVLTVAMAGLVV). Over 139-148 (WRSKRTDTLL) the chain is Cytoplasmic.

It belongs to the RAMP family. As to quaternary structure, heterodimer of CALCRL and RAMP3; interaction induces allosteric modulation of CALCRL function and ligand specificity for adrenomedullin/ADM and intermedin/ADM2. Heterodimer of CALCR and RAMP3; interaction form the receptor complex AMYR3 for amylin/IAPP. Interacts with GPER1. Strongly expressed in lung, breast, immune system and fetal tissues.

The protein resides in the cell membrane. The protein localises to the membrane. In terms of biological role, accessory protein that interacts with and modulates the function of G-protein coupled receptors including calcitonin gene-related peptide type 1 receptor (CALCRL), calcitonin receptor (CALCR) and G-protein coupled estrogen receptor 1 (GPER1). Required for the transport of CALCRL and GPER1 receptors to the plasma membrane. Plays a role in cardioprotection by reducing cardiac hypertrophy and perivascular fibrosis in a GPER1-dependent manner. Together with CALCRL, form a receptor complex for adrenomedullin/ADM and intermedin/ADM2. Together with CALCR, act as a receptor complex for amylin/IAPP. The sequence is that of Receptor activity-modifying protein 3 from Homo sapiens (Human).